The sequence spans 302 residues: Dihydroorotate dehydrogenase B (NAD(+)), catalytic subunit (302 aa).

FMN-binding positions include Ser23 and 47–48 (KG). Substrate contacts are provided by residues Lys47 and 71-75 (NSVGL). The FMN site is built by Asn101 and Asn128. Residue Asn128 participates in substrate binding. Residue Cys131 is the Nucleophile of the active site. Residues Lys166 and Ile192 each contribute to the FMN site. A substrate-binding site is contributed by 193-194 (NT). Residues Gly218, 244-245 (GG), and 266-267 (GT) each bind FMN.

It belongs to the dihydroorotate dehydrogenase family. Type 1 subfamily. Heterotetramer of 2 PyrK and 2 PyrD type B subunits. It depends on FMN as a cofactor.

Its subcellular location is the cytoplasm. It catalyses the reaction (S)-dihydroorotate + NAD(+) = orotate + NADH + H(+). It participates in pyrimidine metabolism; UMP biosynthesis via de novo pathway; orotate from (S)-dihydroorotate (NAD(+) route): step 1/1. Functionally, catalyzes the conversion of dihydroorotate to orotate with NAD(+) as electron acceptor. The chain is Dihydroorotate dehydrogenase B (NAD(+)), catalytic subunit (pyrD) from Alkaliphilus oremlandii (strain OhILAs) (Clostridium oremlandii (strain OhILAs)).